Here is a 513-residue protein sequence, read N- to C-terminus: Serine/threonine protein phosphatase 2A 55 kDa regulatory subunit B alpha isoform (513 aa).

At Met-1 the chain carries N-acetylmethionine. 6 WD repeats span residues 36 to 75, 112 to 153, 232 to 270, 281 to 321, 340 to 378, and 483 to 513; these read QEVD…NSSG, EIEE…IKKI, AHDY…QSFN, DLSE…LCDS, EIIA…GPVA, and DYTT…MYYA.

It belongs to the phosphatase 2A regulatory subunit B family. In terms of assembly, PP2A consists of a common heteromeric enzyme, composed of a catalytic subunit (subunits C), a constant regulatory subunit (subunit A), and a variety of regulatory subunits such as subunits B (the R2/B/PR55/B55, R3/B''/PR72/PR130/PR59 and R5/B'/B56 families). Interacts with SIC/RON3. As to expression, expressed ubiquitously.

Functionally, the B regulatory subunit may modulate substrate selectivity and catalytic activity, and may also direct the localization of the catalytic enzyme to a particular subcellular compartment. The sequence is that of Serine/threonine protein phosphatase 2A 55 kDa regulatory subunit B alpha isoform (PP2AB1) from Arabidopsis thaliana (Mouse-ear cress).